Here is a 269-residue protein sequence, read N- to C-terminus: MSQQNGNVNRVGAQDRVGASGGMEHSFGFKAVDENEKQGLVNDVFHKVAKRYDIMNDLMSAGMHRVWKDAMVAWLAPSKRPGWTSLDVAGGTGDIAFRIVEASGRQAHVTILDINGSMLGVGRERAIKKGLIDNLEFVEANAEELPFEDNSFDAYTIAFGIRNVPHIDKALSEAYCVLKPGGRFLCLEFSEVELPVLDKVYDEWSFRAIPRIGKMITGDADSYSYLVESIRKFPKQQDFAAMIEKAGFERVSYRNFTGGIAALHSGWKL.

S-adenosyl-L-methionine contacts are provided by residues T92, D113, and N141–A142.

This sequence belongs to the class I-like SAM-binding methyltransferase superfamily. MenG/UbiE family.

It carries out the reaction a 2-demethylmenaquinol + S-adenosyl-L-methionine = a menaquinol + S-adenosyl-L-homocysteine + H(+). The enzyme catalyses a 2-methoxy-6-(all-trans-polyprenyl)benzene-1,4-diol + S-adenosyl-L-methionine = a 5-methoxy-2-methyl-3-(all-trans-polyprenyl)benzene-1,4-diol + S-adenosyl-L-homocysteine + H(+). Its pathway is quinol/quinone metabolism; menaquinone biosynthesis; menaquinol from 1,4-dihydroxy-2-naphthoate: step 2/2. It participates in cofactor biosynthesis; ubiquinone biosynthesis. Methyltransferase required for the conversion of demethylmenaquinol (DMKH2) to menaquinol (MKH2) and the conversion of 2-polyprenyl-6-methoxy-1,4-benzoquinol (DDMQH2) to 2-polyprenyl-3-methyl-6-methoxy-1,4-benzoquinol (DMQH2). The polypeptide is Ubiquinone/menaquinone biosynthesis C-methyltransferase UbiE (Brucella suis (strain ATCC 23445 / NCTC 10510)).